Consider the following 888-residue polypeptide: Leucine--tRNA ligase (888 aa).

The 'HIGH' region motif lies at 42–52; it reads PYPSGKLHMGH. Residues 640 to 644 carry the 'KMSKS' region motif; it reads TMSKS. Residue Lys-643 coordinates ATP.

Belongs to the class-I aminoacyl-tRNA synthetase family.

It is found in the cytoplasm. The enzyme catalyses tRNA(Leu) + L-leucine + ATP = L-leucyl-tRNA(Leu) + AMP + diphosphate. This Polaromonas naphthalenivorans (strain CJ2) protein is Leucine--tRNA ligase.